Here is a 178-residue protein sequence, read N- to C-terminus: Acireductone dioxygenase (178 aa).

The Fe(2+) site is built by histidine 100, histidine 102, glutamate 106, and histidine 145. Positions 100, 102, 106, and 145 each coordinate Ni(2+).

The protein belongs to the acireductone dioxygenase (ARD) family. In terms of assembly, monomer. The cofactor is Fe(2+). Ni(2+) serves as cofactor.

It catalyses the reaction 1,2-dihydroxy-5-(methylsulfanyl)pent-1-en-3-one + O2 = 3-(methylsulfanyl)propanoate + CO + formate + 2 H(+). The catalysed reaction is 1,2-dihydroxy-5-(methylsulfanyl)pent-1-en-3-one + O2 = 4-methylsulfanyl-2-oxobutanoate + formate + 2 H(+). It functions in the pathway amino-acid biosynthesis; L-methionine biosynthesis via salvage pathway; L-methionine from S-methyl-5-thio-alpha-D-ribose 1-phosphate: step 5/6. Functionally, catalyzes 2 different reactions between oxygen and the acireductone 1,2-dihydroxy-3-keto-5-methylthiopentene (DHK-MTPene) depending upon the metal bound in the active site. Fe-containing acireductone dioxygenase (Fe-ARD) produces formate and 2-keto-4-methylthiobutyrate (KMTB), the alpha-ketoacid precursor of methionine in the methionine recycle pathway. Ni-containing acireductone dioxygenase (Ni-ARD) produces methylthiopropionate, carbon monoxide and formate, and does not lie on the methionine recycle pathway. The sequence is that of Acireductone dioxygenase (mtnD) from Bacillus subtilis (strain 168).